The primary structure comprises 361 residues: Phospho-N-acetylmuramoyl-pentapeptide-transferase (361 aa).

The next 10 membrane-spanning stretches (helical) occupy residues 25–45 (TGGAMVTGALFVFMFGPWIID), 72–92 (TPTMGGLMILSGLTVGTLLWA), 95–115 (LNPYVWIVLAVTLGFGFVGFY), 135–155 (LLIEFTIAGAACFALVWLGRA), 169–189 (VMLNLGWAFVVFGAFVVVGAG), 200–220 (GLAIVPVMIAAASFGLISYLA), 240–260 (LAVLCGALLGAGLGFLWFNAP), 264–284 (IFMGDTGSLALGGMLGSIAVA), 289–309 (IVLAVIGGLFVLEAVSVIVQV), and 338–358 (QIVIRFWIIAVMLALAGLSTL).

The protein belongs to the glycosyltransferase 4 family. MraY subfamily. It depends on Mg(2+) as a cofactor.

The protein localises to the cell inner membrane. It carries out the reaction UDP-N-acetyl-alpha-D-muramoyl-L-alanyl-gamma-D-glutamyl-meso-2,6-diaminopimeloyl-D-alanyl-D-alanine + di-trans,octa-cis-undecaprenyl phosphate = di-trans,octa-cis-undecaprenyl diphospho-N-acetyl-alpha-D-muramoyl-L-alanyl-D-glutamyl-meso-2,6-diaminopimeloyl-D-alanyl-D-alanine + UMP. Its pathway is cell wall biogenesis; peptidoglycan biosynthesis. Catalyzes the initial step of the lipid cycle reactions in the biosynthesis of the cell wall peptidoglycan: transfers peptidoglycan precursor phospho-MurNAc-pentapeptide from UDP-MurNAc-pentapeptide onto the lipid carrier undecaprenyl phosphate, yielding undecaprenyl-pyrophosphoryl-MurNAc-pentapeptide, known as lipid I. The sequence is that of Phospho-N-acetylmuramoyl-pentapeptide-transferase from Rhodopseudomonas palustris (strain ATCC BAA-98 / CGA009).